The chain runs to 159 residues: MINYLKSFFLYEIVRGMALTLKYFFKPKVTINYPYEKSPVSPRFKGEHALRRYENGEERCIACKLCEAICPAQAIVIEADEREDGSRRTTRYDIDMTKCIYCGLCQAACPVDAIVEGPNFEFASLTHTALIYDKERLLQNGDRWEQALASKLHKDYEYR.

4Fe-4S ferredoxin-type domains lie at 51-80 and 90-119; these read RRYE…IEAD and TRYD…EGPN. [4Fe-4S] cluster contacts are provided by C60, C63, C66, C70, C99, C102, C105, and C109.

It belongs to the complex I 23 kDa subunit family. As to quaternary structure, NDH-1 is composed of 14 different subunits. Subunits NuoA, H, J, K, L, M, N constitute the membrane sector of the complex. The cofactor is [4Fe-4S] cluster.

Its subcellular location is the cell inner membrane. The catalysed reaction is a quinone + NADH + 5 H(+)(in) = a quinol + NAD(+) + 4 H(+)(out). Its function is as follows. NDH-1 shuttles electrons from NADH, via FMN and iron-sulfur (Fe-S) centers, to quinones in the respiratory chain. The immediate electron acceptor for the enzyme in this species is believed to be ubiquinone. Couples the redox reaction to proton translocation (for every two electrons transferred, four hydrogen ions are translocated across the cytoplasmic membrane), and thus conserves the redox energy in a proton gradient. The protein is NADH-quinone oxidoreductase subunit I of Rickettsia massiliae (strain Mtu5).